The chain runs to 577 residues: Probable cytochrome c biosynthesis protein (577 aa).

Belongs to the CcmF/CycK/Ccl1/NrfE/CcsA family.

The protein localises to the mitochondrion. In terms of biological role, could be involved in assembly and maturation of cytochromes c. May play a role in guidance of apocytochromes and heme groups for the covalent linkage introduced by the cytochrome-c-heme lyase. The protein is Probable cytochrome c biosynthesis protein of Oenothera berteroana (Bertero's evening primrose).